A 307-amino-acid chain; its full sequence is Dioxygenase cdmD (307 aa).

Residues H146, D148, and H226 each coordinate Fe cation.

It belongs to the PhyH family. In terms of assembly, homodimer. It depends on Fe cation as a cofactor.

It catalyses the reaction verruculide A + 2-oxoglutarate + O2 = chrodrimanin T + succinate + CO2. The catalysed reaction is chrodrimanin E + 2-oxoglutarate + O2 = chrodrimanin A + succinate + CO2. Its pathway is secondary metabolite biosynthesis; terpenoid biosynthesis. Its function is as follows. Dioxygenase; part of the gene cluster that mediates the biosynthesis of chrodrimanin B, a meroterpenoid that acts as a potent blocker of insect GABA-gated chloride channels. The first step of the pathway is the biosynthesis of 6-hydroxymellein by the polyketide synthase cdmE. The prenyltransferase cdmH acts as a 6-hydroxymellein 5-farnesyltransferase and produces the hydrophobic metabolite verruculide C. The FAD-dependent monooxygenase cdmI further converts verruculide C into verruculide B. The terpene cyclase cdmG then produced the pentacyclic molecule 3-hydroxypentacecilide A, the backbone structure of chrodrimanin B, via folding the farnesyl moiety of the substrate into the chair-boat conformation. The short-chain dehydrogenase/reductase cdmF functions as the 3-OH dehydrogenase that oxidizes the C-3 hydroxyl group of 3-hydroxypentacecilide A and produces chrodrimanin C, the dehydrogenated product of 3-hydroxypentacecilide A. The cytochrome P450 monooxygenase cdmJ then accepts both 3-hydroxypentacecilide A and chrodrimanin C and functions as a C-7-beta-hydroxylase to produce respectively chrodrimanin H and chrodrimanin F. The dioxygenase cdmA accepts chrodrimanin H to afford chrodrimanin E, which is further transformed to chrodrimanin A by the dioxygenase cdmD. CdmA can also accept chrodrimanin C as substrate to convert it into verruculide A, which is further converted into chrodrimanin T by cdmD. The last step of the biosynthesis is proposed to be performed by the acetyltransferase cdmC which acetylates chrodrimanin A to yield chrodrimanin B. The pathway may also lead to the production of additional shunt products, including chrodrimanins T and U. In Talaromyces verruculosus (Penicillium verruculosum), this protein is Dioxygenase cdmD.